The primary structure comprises 410 residues: Histone-lysine N-methyltransferase SUV39H2 (410 aa).

The 59-residue stretch at 47 to 105 (YEVEYLCDYKVVKDMEYYLVKWKGWPDSTNTWEPLQNLKCPLLLQQFSNDKHNYLSQVK) folds into the Chromo domain. Residues 189–247 (FGCSCTDCFFQKCCPAEAGVLLAYNKNQQIKIPPGTPIYECNSRCQCGPDCPNRIVQKG) enclose the Pre-SET domain. Zn(2+) is bound by residues Cys191, Cys193, Cys196, Cys201, Cys202, Cys229, Cys233, Cys235, and Cys239. In terms of domain architecture, SET spans 250–373 (YSLCIFRTSN…AGEELTFDYQ (124 aa)). S-adenosyl-L-methionine-binding positions include 261–263 (RGW) and 330–331 (NH). Cys333 serves as a coordination point for Zn(2+). Position 372 (Tyr372) interacts with S-adenosyl-L-methionine. Phosphoserine is present on residues Ser381, Ser384, and Ser388. Residues 394–410 (VRTVCKCGAVTCRGYLN) form the Post-SET domain. Cys398 lines the Zn(2+) pocket. Lys399 lines the S-adenosyl-L-methionine pocket. Positions 400 and 405 each coordinate Zn(2+).

It belongs to the class V-like SAM-binding methyltransferase superfamily. Histone-lysine methyltransferase family. Suvar3-9 subfamily. As to quaternary structure, interacts with SMAD5. The large PER complex involved in the histone methylation is composed of at least PER2, CBX3, TRIM28, SUV39H1 and/or SUV39H2; CBX3 mediates the formation of the complex. In terms of processing, ubiquitinated by the DCX(DCAF13) E3 ubiquitin ligase complex, leading to its degradation.

The protein resides in the nucleus. It localises to the chromosome. It is found in the centromere. It carries out the reaction L-lysyl(9)-[histone H3] + 3 S-adenosyl-L-methionine = N(6),N(6),N(6)-trimethyl-L-lysyl(9)-[histone H3] + 3 S-adenosyl-L-homocysteine + 3 H(+). Functionally, histone methyltransferase that specifically trimethylates 'Lys-9' of histone H3 using monomethylated H3 'Lys-9' as substrate. H3 'Lys-9' trimethylation represents a specific tag for epigenetic transcriptional repression by recruiting HP1 (CBX1, CBX3 and/or CBX5) proteins to methylated histones. Mainly functions in heterochromatin regions, thereby playing a central role in the establishment of constitutive heterochromatin at pericentric and telomere regions. H3 'Lys-9' trimethylation is also required to direct DNA methylation at pericentric repeats. SUV39H1 is targeted to histone H3 via its interaction with RB1 and is involved in many processes, such as cell cycle regulation, transcriptional repression and regulation of telomere length. May participate in regulation of higher-order chromatin organization during spermatogenesis. Recruited by the large PER complex to the E-box elements of the circadian target genes such as PER2 itself or PER1, contributes to the conversion of local chromatin to a heterochromatin-like repressive state through H3 'Lys-9' trimethylation. This is Histone-lysine N-methyltransferase SUV39H2 (SUV39H2) from Homo sapiens (Human).